Reading from the N-terminus, the 696-residue chain is Iron-sulfur clusters transporter ATM1, mitochondrial (696 aa).

Residues 1 to 67 (MIKWGLFGAV…RFFSSSHKLG (67 aa)) constitute a mitochondrion transit peptide. Topologically, residues 68–109 (VNTKEDSSTYLFGRKISTSESKMLKSLLVTIWPKNKPSFKLR) are mitochondrial matrix. The chain crosses the membrane as a helical span at residues 110–131 (VIFALSLLIASKLLNVEVPFFF). The ABC transmembrane type-1 domain occupies 110 to 400 (VIFALSLLIA…LGSVYRELKQ (291 aa)). Over 132–154 (KKIIDEMNVDWNDQLGTVGTVIG) the chain is Mitochondrial intermembrane. The helical transmembrane segment at 155–178 (TLIIAYGGARFGAVLFGELRNAVF) threads the bilayer. The Mitochondrial matrix portion of the chain corresponds to 179–227 (ASVAQTAIKRVAHNTFVHLLNMDLNFHLSRQTGGLTRAIDRGTKGISYV). A helical membrane pass occupies residues 228 to 251 (LNAMVFHIIPISFEISMVCGILIY). N252 is a topological domain (mitochondrial intermembrane). The helical transmembrane segment at 253–273 (YGLSFAAVTLATMLSYSVFTI) threads the bilayer. The Mitochondrial matrix segment spans residues 274–339 (KTTAWRTGFR…ASVKVATSLA (66 aa)). Glutathione is bound by residues 279 to 283 (RTGFR) and 342 to 345 (NAGQ). A helical transmembrane segment spans residues 340 to 358 (YLNAGQNFIFTSALTAMMY). The Mitochondrial intermembrane portion of the chain corresponds to 359 to 373 (MGCNGVATGSLTVGD). Residues 374-395 (LVLINQLVFQLSVPLSFLGSVY) form a helical membrane-spanning segment. A glutathione-binding site is contributed by G392. The Mitochondrial matrix segment spans residues 396–696 (RELKQSLLDM…EYAKETEEQK (301 aa)). The ABC transporter domain maps to 438–674 (IKFENVTFGY…PNSLYSQLWN (237 aa)). ATP-binding positions include Y447 and 471–482 (GPSGSGKSTILR).

It belongs to the ABC transporter superfamily. ABCB family. Heavy Metal importer (TC 3.A.1.210) subfamily. As to quaternary structure, homodimer.

The protein resides in the mitochondrion inner membrane. Performs an essential function in the generation of cytoplasmic iron-sulfur proteins by mediating the ATP-dependent export of Fe/S cluster precursors synthesized by NFS1 and other mitochondrial proteins. Hydrolyzes ATP. Binds glutathione and may function by transporting a glutathione-conjugated iron-sulfur compound. The chain is Iron-sulfur clusters transporter ATM1, mitochondrial from Debaryomyces hansenii (strain ATCC 36239 / CBS 767 / BCRC 21394 / JCM 1990 / NBRC 0083 / IGC 2968) (Yeast).